The following is a 333-amino-acid chain: B3 domain-containing transcription factor NGA4 (333 aa).

Positions 36–145 form a DNA-binding region, TF-B3; the sequence is FDKVLTPSDV…KIMFIDWRPR (110 aa). The tract at residues 268–333 is disordered; sequence VEESSSSGDT…YKRKGKSLEL (66 aa). Over residues 323–333 the composition is skewed to basic and acidic residues; sequence EYKRKGKSLEL.

Its subcellular location is the nucleus. Functionally, regulates lateral organ growth. Functionally redundant with NGA1, NGA2 and NGA3. This chain is B3 domain-containing transcription factor NGA4 (NGA4), found in Arabidopsis thaliana (Mouse-ear cress).